Here is a 232-residue protein sequence, read N- to C-terminus: MLTRKQYELLRFINERLKEAGVPPSFDEMKDALDLRSKSGIHRLITALEERGFIRRLPNRARAIEVIKLPELSQAAGNRRGFTPSVIEGNLGKVRTSTPALEDGERPVAVPVMGRIAAGTPIEALQTRSHTISVPADMLGNGDHYALEVRGDSMVDAGILDGDMALIQRNETADTGDIVVALIDDEEATLKRFRRRGASIALEPANTAYEVRILPPNRVKIQGKLVGLYRKY.

The segment at residues 26-46 is a DNA-binding region (H-T-H motif); it reads FDEMKDALDLRSKSGIHRLIT. Active-site for autocatalytic cleavage activity residues include Ser153 and Lys191.

Belongs to the peptidase S24 family. As to quaternary structure, homodimer.

It carries out the reaction Hydrolysis of Ala-|-Gly bond in repressor LexA.. Functionally, represses a number of genes involved in the response to DNA damage (SOS response), including recA and lexA. In the presence of single-stranded DNA, RecA interacts with LexA causing an autocatalytic cleavage which disrupts the DNA-binding part of LexA, leading to derepression of the SOS regulon and eventually DNA repair. The polypeptide is LexA repressor (Bradyrhizobium sp. (strain ORS 278)).